We begin with the raw amino-acid sequence, 131 residues long: Binder of sperm protein homolog 2 (131 aa).

The first 22 residues, 1-22 (MEVMSHLVHWVFLAVYMYELNA), serve as a signal peptide directing secretion. Fibronectin type-II domains are found at residues 35–79 (ISTD…YCTA) and 80–128 (QDPP…QCSP). 4 disulfides stabilise this stretch: cysteine 40–cysteine 64, cysteine 54–cysteine 77, cysteine 85–cysteine 111, and cysteine 99–cysteine 126.

The protein belongs to the seminal plasma protein family. As to expression, epididymis.

The protein resides in the secreted. In terms of biological role, binds sperm in vitro but has no effect on sperm capacitation. Also binds gelatin and heparin, but not chondroitin sulfate B or phospholipid liposomes. The polypeptide is Binder of sperm protein homolog 2 (Mus musculus (Mouse)).